The following is a 119-amino-acid chain: Methylglyoxal synthase (119 aa).

One can recognise an MGS-like domain in the interval Met-1–Ile-119. Substrate-binding positions include His-8, Lys-12, Thr-34–Thr-37, and Ser-54–Gly-55. Asp-60 (proton donor/acceptor) is an active-site residue. Residue His-87 participates in substrate binding.

Belongs to the methylglyoxal synthase family.

The enzyme catalyses dihydroxyacetone phosphate = methylglyoxal + phosphate. Its function is as follows. Catalyzes the formation of methylglyoxal from dihydroxyacetone phosphate. This chain is Methylglyoxal synthase, found in Clostridium perfringens (strain ATCC 13124 / DSM 756 / JCM 1290 / NCIMB 6125 / NCTC 8237 / Type A).